The primary structure comprises 2567 residues: Highly reducing polyketide synthase sor1 (2567 aa).

Residues 14-436 (SEPIAIIGMS…GANAHIILED (423 aa)) enclose the Ketosynthase family 3 (KS3) domain. Active-site for beta-ketoacyl synthase activity residues include cysteine 187, histidine 322, and histidine 359. The tract at residues 550-841 (VFTGQGAQWW…VVEVGPHTAL (292 aa)) is malonyl-CoA:ACP transacylase (MAT) domain. The tract at residues 939–1079 (HHLLGSLVEG…GLISIEFEAS (141 aa)) is N-terminal hotdog fold. A dehydratase (DH) domain region spans residues 939-1249 (HHLLGSLVEG…GFSYQSLGRS (311 aa)). A PKS/mFAS DH domain is found at 939–1252 (HHLLGSLVEG…YQSLGRSVSL (314 aa)). The active-site Proton acceptor; for dehydratase activity is the histidine 971. Residues 1095 to 1252 (YKRQIPPAQL…YQSLGRSVSL (158 aa)) form a C-terminal hotdog fold region. Catalysis depends on aspartate 1161, which acts as the Proton donor; for dehydratase activity. The tract at residues 1426–1534 (LEIGASTGGI…RSLLKPGGTL (109 aa)) is methyltransferase (CMet) domain. The tract at residues 1852 to 2163 (FLPELLVFGD…TEEETGKRVL (312 aa)) is enoyl reductase (ER) domain. A ketoreductase (KR) domain region spans residues 2187-2369 (ASYLIVGGNG…AVSIDLSLVD (183 aa)). In terms of domain architecture, Carrier spans 2481–2558 (EAISVVGSAV…QLVANVVDRS (78 aa)). Serine 2518 is modified (O-(pantetheine 4'-phosphoryl)serine).

The protein operates within secondary metabolite biosynthesis. Its function is as follows. Highly reducing polyketide synthase; part of the SOR gene cluster that mediates the biosynthesis of sorbicillinoids, a diverse group of yellow secondary metabolites that restrict growth of competing pathogenic fungi but not of bacteria. Sorbicillinoids biosynthesis requires the action of two PKSs. The SOR cluster is required for the production of trichodimerol and dihydrotrichotetronin, with sor2 being sufficient for production of trichodimerol, but not dihydrotrichotetronin in the light. Sor1 iteratively combines three acetyl units and the growing chain is modified by the ketoacyl reductase subunit, and optional by the enoyl reductase subunit in the second cycle. The polyketide is then handed over to the PKS sor2, which adds three more acetyl units, and two methyl groups. Sor2 releases an aldehyde, which undergoes spontaneous cyclization resulting in the formation of sorbicillin or 2',3'-dihydrosorbicillin. The monooxygenase sor5 oxidizes sorbicillin and 2',3'-dihydrosorbicillin to 2',3'-dihydrosorbicillinol and sorbicillinol, respectively. The oxidoreductase sor8 further converts sorbicillinol into oxosorbicillinol. Sorbicillinol is the building block for the other sorbicillinoids such as disorbicillinol, bisvertinolon, dihydrobisvertinolone, and dihydrotrichotetronine. In Hypocrea jecorina (strain QM6a) (Trichoderma reesei), this protein is Highly reducing polyketide synthase sor1.